A 486-amino-acid chain; its full sequence is Ribosomal RNA small subunit methyltransferase F (486 aa).

Residues 124 to 130, Glu-148, Asp-175, and Asp-193 each bind S-adenosyl-L-methionine; that span reads ASAPGSK. Catalysis depends on Cys-246, which acts as the Nucleophile.

The protein belongs to the class I-like SAM-binding methyltransferase superfamily. RsmB/NOP family.

Its subcellular location is the cytoplasm. It catalyses the reaction cytidine(1407) in 16S rRNA + S-adenosyl-L-methionine = 5-methylcytidine(1407) in 16S rRNA + S-adenosyl-L-homocysteine + H(+). Functionally, specifically methylates the cytosine at position 1407 (m5C1407) of 16S rRNA. This chain is Ribosomal RNA small subunit methyltransferase F, found in Shewanella baltica (strain OS195).